Here is a 437-residue protein sequence, read N- to C-terminus: MAGGTLYTYPDNWRAYKPLIAAQYSRFPIKVASSPPEFQFGLTNKTPEFLKKFPLGKVPAFEGNNGFCLFESSAIAHYVANDELRGSNNRLHQAQVIQWVGFSDSHVVPPASAWVFPTLGIMQFNKQATEQAKEEIKTVLGVLDCHLQTRTFLVGERITLADITLTCSLLWLYKQVLEPSFRQPYGNVTRWFVTCVNQPEFRAVLGEVKLCDKMAQFDAKKFAEVQPKKETPKKEKPAKEPKKKKKKKKKATPAPAPAPEDDLDESEKALAAEPKSKDPYAHLPKSSFIMDEFKRKYSNEDTLTVALPYFWEHFEKEGWSIWYAEYKFPEELTQTFMSCNLITGMFQRLDKLRKTAFASVILFGTNNNSTISGVWVFRGHDLAFTLSEDWQIDYESYTWRKLESDSEECRTMVKEYFAWEGEFKHVGKAFNQGKIFK.

One can recognise a GST N-terminal domain in the interval 2 to 87 (AGGTLYTYPD…YVANDELRGS (86 aa)). Residues 89–222 (NRLHQAQVIQ…KMAQFDAKKF (134 aa)) form the GST C-terminal domain. Residues 225 to 240 (VQPKKETPKKEKPAKE) are compositionally biased toward basic and acidic residues. The tract at residues 225–279 (VQPKKETPKKEKPAKEPKKKKKKKKKATPAPAPAPEDDLDESEKALAAEPKSKDP) is disordered. The segment covering 241 to 251 (PKKKKKKKKKA) has biased composition (basic residues). A compositionally biased stretch (basic and acidic residues) spans 266 to 279 (SEKALAAEPKSKDP). Residues 276-437 (SKDPYAHLPK…KAFNQGKIFK (162 aa)) form the EF-1-gamma C-terminal domain.

As to quaternary structure, EF-1 is composed of four subunits: alpha, beta, delta, and gamma.

In terms of biological role, probably plays a role in anchoring the complex to other cellular components. This is Elongation factor 1-gamma-B (eef1g-b) from Xenopus laevis (African clawed frog).